An 890-amino-acid chain; its full sequence is DNA mismatch repair protein MutS (890 aa).

607–614 contributes to the ATP binding site; it reads GPNMSGKS.

Belongs to the DNA mismatch repair MutS family.

In terms of biological role, this protein is involved in the repair of mismatches in DNA. It is possible that it carries out the mismatch recognition step. This protein has a weak ATPase activity. The polypeptide is DNA mismatch repair protein MutS (Bacillus thuringiensis (strain Al Hakam)).